The primary structure comprises 82 residues: NAD(P)H-quinone oxidoreductase subunit O, organellar chromatophore (82 aa).

This sequence belongs to the complex I NdhO subunit family. As to quaternary structure, NDH-1 can be composed of about 15 different subunits; different subcomplexes with different compositions have been identified which probably have different functions.

The protein resides in the plastid. Its subcellular location is the organellar chromatophore thylakoid membrane. The catalysed reaction is a plastoquinone + NADH + (n+1) H(+)(in) = a plastoquinol + NAD(+) + n H(+)(out). It catalyses the reaction a plastoquinone + NADPH + (n+1) H(+)(in) = a plastoquinol + NADP(+) + n H(+)(out). NDH-1 shuttles electrons from an unknown electron donor, via FMN and iron-sulfur (Fe-S) centers, to quinones in the respiratory and/or the photosynthetic chain. The immediate electron acceptor for the enzyme in this species is believed to be plastoquinone. Couples the redox reaction to proton translocation, and thus conserves the redox energy in a proton gradient. Cyanobacterial NDH-1 also plays a role in inorganic carbon-concentration. In Paulinella chromatophora, this protein is NAD(P)H-quinone oxidoreductase subunit O, organellar chromatophore.